The chain runs to 472 residues: Argininosuccinate lyase (472 aa).

This sequence belongs to the lyase 1 family. Argininosuccinate lyase subfamily.

The protein resides in the cytoplasm. It carries out the reaction 2-(N(omega)-L-arginino)succinate = fumarate + L-arginine. The protein operates within amino-acid biosynthesis; L-arginine biosynthesis; L-arginine from L-ornithine and carbamoyl phosphate: step 3/3. This chain is Argininosuccinate lyase, found in Synechococcus sp. (strain CC9311).